The sequence spans 99 residues: Large ribosomal subunit protein uL23 (99 aa).

It belongs to the universal ribosomal protein uL23 family. Part of the 50S ribosomal subunit. Contacts protein L29, and trigger factor when it is bound to the ribosome.

One of the early assembly proteins it binds 23S rRNA. One of the proteins that surrounds the polypeptide exit tunnel on the outside of the ribosome. Forms the main docking site for trigger factor binding to the ribosome. The protein is Large ribosomal subunit protein uL23 of Stenotrophomonas maltophilia (strain R551-3).